Consider the following 236-residue polypeptide: Uridylate kinase (236 aa).

10–13 (KLSG) contributes to the ATP binding site. Gly52 is a binding site for UMP. ATP contacts are provided by Gly53 and Arg57. Residues Asp72 and 133–140 (TGNPFFTT) contribute to the UMP site. Positions 160, 166, and 169 each coordinate ATP.

This sequence belongs to the UMP kinase family. In terms of assembly, homohexamer.

It is found in the cytoplasm. The catalysed reaction is UMP + ATP = UDP + ADP. Its pathway is pyrimidine metabolism; CTP biosynthesis via de novo pathway; UDP from UMP (UMPK route): step 1/1. Its activity is regulated as follows. Inhibited by UTP. Its function is as follows. Catalyzes the reversible phosphorylation of UMP to UDP. In Phocaeicola vulgatus (strain ATCC 8482 / DSM 1447 / JCM 5826 / CCUG 4940 / NBRC 14291 / NCTC 11154) (Bacteroides vulgatus), this protein is Uridylate kinase.